Here is a 199-residue protein sequence, read N- to C-terminus: Probable adenine phosphoribosyltransferase (199 aa).

The protein belongs to the purine/pyrimidine phosphoribosyltransferase family. As to quaternary structure, homodimer.

It is found in the cytoplasm. The enzyme catalyses AMP + diphosphate = 5-phospho-alpha-D-ribose 1-diphosphate + adenine. It participates in purine metabolism; AMP biosynthesis via salvage pathway; AMP from adenine: step 1/1. Functionally, catalyzes a salvage reaction resulting in the formation of AMP, that is energically less costly than de novo synthesis. The polypeptide is Probable adenine phosphoribosyltransferase (aprt) (Dictyostelium discoideum (Social amoeba)).